The sequence spans 282 residues: S-formylglutathione hydrolase (282 aa).

The residue at position 2 (Ala-2) is an N-acetylalanine. Lys-4 bears the N6-succinyllysine mark. Active-site charge relay system residues include Ser-149, Asp-226, and His-260.

It belongs to the esterase D family. Homodimer.

It is found in the cytoplasm. It localises to the cytoplasmic vesicle. It carries out the reaction S-formylglutathione + H2O = formate + glutathione + H(+). In terms of biological role, serine hydrolase involved in the detoxification of formaldehyde. The chain is S-formylglutathione hydrolase (ESD) from Bos taurus (Bovine).